A 420-amino-acid chain; its full sequence is Homeobox-containing protein 1 (420 aa).

Positions 18-49 (DEPRFTIEQIDLLQRLRRTGMTKHEILHALET) constitute an HNF-p1 domain. Residues 56–139 (EHSDKFGRRS…GKMSPTRYHA (84 aa)) form a disordered region. A Glycyl lysine isopeptide (Lys-Gly) (interchain with G-Cter in SUMO2) cross-link involves residue Lys-60. Composition is skewed to low complexity over residues 64 to 73 (RSSYGGSSYG) and 81 to 93 (ASSS…TQTQ). Residues 94–132 (HSGMSPSPSNSYDTSPQPCTTNQNGRENNERLSTSNGKM) show a composition bias toward polar residues. Lys-131 is covalently cross-linked (Glycyl lysine isopeptide (Lys-Gly) (interchain with G-Cter in SUMO2)). A POU-specific atypical domain is found at 145–241 (RSYSFEASEE…PGATLSMRPA (97 aa)). Phosphoserine is present on Ser-148. Lys-161 participates in a covalent cross-link: Glycyl lysine isopeptide (Lys-Gly) (interchain with G-Cter in SUMO2). The residue at position 170 (Ser-170) is a Phosphoserine. Glycyl lysine isopeptide (Lys-Gly) (interchain with G-Cter in SUMO2) cross-links involve residues Lys-174, Lys-217, and Lys-310. Positions 267–341 (RRGSRFTWRK…NRRKEIKRRA (75 aa)) form a DNA-binding region, homeobox. A disordered region spans residues 353–385 (IDVQSPGGHSNSDDVDGNDYSEQDDSTSHSDHQ). Residues 365–377 (DDVDGNDYSEQDD) are compositionally biased toward acidic residues. Lys-413 participates in a covalent cross-link: Glycyl lysine isopeptide (Lys-Gly) (interchain with G-Cter in SUMO1); alternate. Lys-413 is covalently cross-linked (Glycyl lysine isopeptide (Lys-Gly) (interchain with G-Cter in SUMO2); alternate).

Associates with the telomerase holoenzyme complex. Interacts with DKC1, XRCC6 and COIL. Ubiquitous. Detected in pancreas, brain, spleen, placenta, prostate, thymus, liver, heart, bone marrow, skeletal muscle, stomach, uterus, testis, kidney, ovary, colon, lung, cardiac muscle and thyroid gland.

It is found in the nucleus. The protein resides in the cytoplasm. It localises to the chromosome. Its subcellular location is the telomere. The protein localises to the cajal body. It is found in the PML body. Functionally, binds directly to 5'-TTAGGG-3' repeats in telomeric DNA. Associates with the telomerase complex at sites of active telomere processing and positively regulates telomere elongation. Important for TERT binding to chromatin, indicating a role in recruitment of the telomerase complex to telomeres. Also plays a role in the alternative lengthening of telomeres (ALT) pathway in telomerase-negative cells where it promotes formation and/or maintenance of ALT-associated promyelocytic leukemia bodies (APBs). Enhances formation of telomere C-circles in ALT cells, suggesting a possible role in telomere recombination. Might also be involved in the DNA damage response at telomeres. This Homo sapiens (Human) protein is Homeobox-containing protein 1.